A 709-amino-acid polypeptide reads, in one-letter code: MLRINQRLLVRSLRDAQYQYLKSTALRFLSSSTQSNVETTPRRSGRLFELNKEYTGKLAQPDGKANIESLYNEFKNDLDKISEFSNGRQGMAPKYGRSRSLSFINRLFQSITNAKNTSSLDPYVVLEQLSKYNLIGPAQYEMILRYYLLVKDAPKDVISLWVKYLEQFTTSNENLMAYTTIAYLKLPDMNEPDCSMLQQILQTERFHTDIPFGRIISIVEQNEVLKRDQELSNRFAYLLNLYATQNKTWFINQLDICYTESRLRSFYNIYSAQRDINNCDIEIITKFMEQFNKLNANSSFPMQVFNEYKDKLSDADGFKLKLGLLDIVSKYPAPSKIQKLQRLLAVWNSYLKPEFGKVGIDASLAYASLIKALNTSGNIEELQNIWEKEIPTEYKNNQVVFEAFLLAIIRRTKITYSQIQNRIDATKFGKLKSVDLAEAIALKIFNENPNDSKVFDDFYQQNSLDSFGSNTSILALKTYGDYIYKTKTDDETYVIANDVRSKVLKLKPQISTQSWKQEVNLILEKFIDIAPSIIPVRVLFEQRGIYQLNFTLQKKILFSEFRKPDGDVQNAEKIFEELMKTDNNKVSQPMRINSPQLMGTMIKGLCQVIGRTHDVSLYPELSKYLEMLPGLEVHMSINWMEQVLRTIRMVFRSGSTKTIPKELLEFSEFIIEKLPAIDPDFNYQFRNDDIAMFKKIGAKSFSKLKSTST.

A mitochondrion-targeting transit peptide spans 1–29 (MLRINQRLLVRSLRDAQYQYLKSTALRFL).

The protein localises to the mitochondrion. In terms of biological role, may be involved in the control of meiotic sister-chromatid recombination. The chain is Meiotic sister-chromatid recombination protein 6, mitochondrial (MSC6) from Candida glabrata (strain ATCC 2001 / BCRC 20586 / JCM 3761 / NBRC 0622 / NRRL Y-65 / CBS 138) (Yeast).